Consider the following 113-residue polypeptide: Putative pterin-4-alpha-carbinolamine dehydratase (113 aa).

Belongs to the pterin-4-alpha-carbinolamine dehydratase family.

The catalysed reaction is (4aS,6R)-4a-hydroxy-L-erythro-5,6,7,8-tetrahydrobiopterin = (6R)-L-erythro-6,7-dihydrobiopterin + H2O. The chain is Putative pterin-4-alpha-carbinolamine dehydratase from Rickettsia bellii (strain OSU 85-389).